Reading from the N-terminus, the 197-residue chain is Negative modulator of initiation of replication (197 aa).

Interaction with DNA stretches follow at residues 100–101, 129–133, and 163–169; these read AV, RTRVY, and NTNSGRK.

It belongs to the SeqA family. In terms of assembly, homodimer. Polymerizes to form helical filaments.

It is found in the cytoplasm. Negative regulator of replication initiation, which contributes to regulation of DNA replication and ensures that replication initiation occurs exactly once per chromosome per cell cycle. Binds to pairs of hemimethylated GATC sequences in the oriC region, thus preventing assembly of replication proteins and re-initiation at newly replicated origins. Repression is relieved when the region becomes fully methylated. This chain is Negative modulator of initiation of replication, found in Haemophilus influenzae (strain ATCC 51907 / DSM 11121 / KW20 / Rd).